Consider the following 210-residue polypeptide: Mitochondrial cardiolipin hydrolase (210 aa).

The Mitochondrial intermembrane segment spans residues 1-6 (MLLWGR). Residues 7-24 (WKVVAGLAGLALSLELLL) form a helical membrane-spanning segment. The Cytoplasmic segment spans residues 25–210 (RYMRRRKPIR…YDFFPEKENK (186 aa)). Positions 138-165 (SSGYMHHKFAVVDGTVVLTGSLNWTVQA) constitute a PLD phosphodiesterase domain. Catalysis depends on residues H143, K145, and D150.

The protein belongs to the phospholipase D family. MitoPLD/Zucchini subfamily. As to quaternary structure, homodimer.

It localises to the mitochondrion outer membrane. The catalysed reaction is a cardiolipin + H2O = a 1,2-diacyl-sn-glycero-3-phospho-(1'-sn-glycerol) + a 1,2-diacyl-sn-glycero-3-phosphate + H(+). Its function is as follows. Presents phospholipase and nuclease activities, depending on the different physiological conditions. Plays a key role in mitochondrial fusion and fission via its phospholipase activity. In its phospholipase role, it uses the mitochondrial lipid cardiolipin as substrate to generate phosphatidate (PA or 1,2-diacyl-sn-glycero-3-phosphate), a second messenger signaling lipid. Production of PA facilitates Mitofusin-mediated fusion, whereas the cleavage of PA by the Lipin family of phosphatases produces diacylgycerol (DAG) which promotes mitochondrial fission. Regulates mitochondrial shape through facilitating mitochondrial fusion. During spermatogenesis, plays a critical role in PIWI-interacting RNA (piRNA) biogenesis. piRNAs provide essential protection against the activity of mobile genetic elements. piRNA-mediated transposon silencing is thus critical for maintaining genome stability, in particular in germline cells when transposons are mobilized as a consequence of wide-spread genomic demethylation. Has been shown to be a backbone-non-specific, single strand-specific nuclease, cleaving either RNA or DNA substrates with similar affinity. Produces 5' phosphate and 3' hydroxyl termini, suggesting it could directly participate in the processing of primary piRNA transcripts. Has been proposed to act as a cardiolipin hydrolase to generate phosphatidic acid at mitochondrial surface. Although it cannot be excluded that it can act as a phospholipase in some circumstances, this activity could not be confirmed. The polypeptide is Mitochondrial cardiolipin hydrolase (pld6) (Xenopus tropicalis (Western clawed frog)).